The chain runs to 316 residues: tRNA methyltransferase 10 homolog B (316 aa).

Disordered stretches follow at residues 1-30 (MDCE…RDDG) and 42-98 (VEYD…DLGN). The segment covering 63-82 (VQRKQRHWERIVSSKKSKRK) has biased composition (basic residues). Residues 75-96 (SSKKSKRKQERERRKIKRAEDL) adopt a coiled-coil conformation. Residues 83–95 (QERERRKIKRAED) show a composition bias toward basic and acidic residues. Residues 113–310 (TKEKLLEAKH…KGVSPGKGYI (198 aa)) enclose the SAM-dependent MTase TRM10-type domain.

This sequence belongs to the class IV-like SAM-binding methyltransferase superfamily. TRM10 family.

It carries out the reaction guanosine(9) in tRNA + S-adenosyl-L-methionine = N(1)-methylguanosine(9) in tRNA + S-adenosyl-L-homocysteine + H(+). In terms of biological role, S-adenosyl-L-methionine-dependent guanine N(1)-methyltransferase that catalyzes the formation of N(1)-methylguanine at position 9 (m1G9) in tRNAs. Probably not able to catalyze formation of N(1)-methyladenine at position 9 (m1A9) in tRNAs. This chain is tRNA methyltransferase 10 homolog B (Trmt10b), found in Rattus norvegicus (Rat).